The primary structure comprises 412 residues: Maintenance of mitochondrial morphology protein 1 (412 aa).

The Lumenal segment spans residues 1–19; it reads MAQDVCPTRSEPSLSFLQG. The chain crosses the membrane as a helical span at residues 20-40; it reads LILGQLSVVLLIAAFIKFFIF. Residues 41-412 are Cytoplasmic-facing; it reads GEAPSAEETA…GSLPGIDMPT (372 aa). Residues 121–337 enclose the SMP-LTD domain; the sequence is QPESLDWFNV…EPRFQEIELP (217 aa). Over residues 372–384 the composition is skewed to basic and acidic residues; sequence ARQELDTETDGLR. The tract at residues 372–412 is disordered; that stretch reads ARQELDTETDGLRYRRRPVGDDTYSVSGSMPGSLPGIDMPT.

It belongs to the MMM1 family. In terms of assembly, homodimer. Component of the ER-mitochondria encounter structure (ERMES) or MDM complex, composed of MMM1, MDM10, MDM12 and MDM34. An MMM1 homodimer associates with one molecule of MDM12 on each side in a pairwise head-to-tail manner, and the SMP-LTD domains of MMM1 and MDM12 generate a continuous hydrophobic tunnel for phospholipid trafficking.

It localises to the endoplasmic reticulum membrane. Component of the ERMES/MDM complex, which serves as a molecular tether to connect the endoplasmic reticulum (ER) and mitochondria. Components of this complex are involved in the control of mitochondrial shape and protein biogenesis, and function in nonvesicular lipid trafficking between the ER and mitochondria. The MDM12-MMM1 subcomplex functions in the major beta-barrel assembly pathway that is responsible for biogenesis of all outer membrane beta-barrel proteins, and acts in a late step after the SAM complex. The MDM10-MDM12-MMM1 subcomplex further acts in the TOM40-specific pathway after the action of the MDM12-MMM1 complex. Essential for establishing and maintaining the structure of mitochondria and maintenance of mtDNA nucleoids. The chain is Maintenance of mitochondrial morphology protein 1 from Podospora anserina (strain S / ATCC MYA-4624 / DSM 980 / FGSC 10383) (Pleurage anserina).